A 236-amino-acid polypeptide reads, in one-letter code: Phosphoribosylaminoimidazole-succinocarboxamide synthase (236 aa).

Belongs to the SAICAR synthetase family.

The catalysed reaction is 5-amino-1-(5-phospho-D-ribosyl)imidazole-4-carboxylate + L-aspartate + ATP = (2S)-2-[5-amino-1-(5-phospho-beta-D-ribosyl)imidazole-4-carboxamido]succinate + ADP + phosphate + 2 H(+). The protein operates within purine metabolism; IMP biosynthesis via de novo pathway; 5-amino-1-(5-phospho-D-ribosyl)imidazole-4-carboxamide from 5-amino-1-(5-phospho-D-ribosyl)imidazole-4-carboxylate: step 1/2. The sequence is that of Phosphoribosylaminoimidazole-succinocarboxamide synthase (purC) from Lactococcus lactis subsp. cremoris (Streptococcus cremoris).